Reading from the N-terminus, the 412-residue chain is Solute carrier family 22 member 18 (412 aa).

The next 10 helical transmembrane spans lie at 16 to 36 (GIII…FMQF), 51 to 71 (VSFG…GPVF), 117 to 137 (LPAA…DLTA), 148 to 168 (LGLC…TLST), 176 to 196 (AFLA…CIPV), 232 to 252 (FLVK…FSII), 264 to 284 (AGYL…LVIG), 294 to 314 (ALLR…ALMS), 316 to 336 (VFHF…LNIV), and 380 to 400 (GVSI…LVLW).

Belongs to the major facilitator (TC 2.A.1) superfamily. Organic cation transporter (TC 2.A.1.19) family.

It localises to the apical cell membrane. Functionally, may act as a transporter of organic cations based on a proton efflux antiport mechanism. May play a role in the transport of chloroquine and quinidine-related compounds in kidney. Plays a role in the regulation of lipid metabolism. The polypeptide is Solute carrier family 22 member 18 (Slc67a1) (Rattus norvegicus (Rat)).